The primary structure comprises 161 residues: General odorant-binding protein 2 (161 aa).

The N-terminal stretch at 1 to 20 (MVNRLILMVVVVFITDSVMG) is a signal peptide. Disulfide bonds link cysteine 39–cysteine 74, cysteine 70–cysteine 128, and cysteine 117–cysteine 137.

The protein belongs to the PBP/GOBP family. As to quaternary structure, homodimer. Olfactory tissue; expressed by the glia-like support cells that ensheathe the sensory neurons and line the base of the sensillum lumen.

In terms of biological role, present in the aqueous fluid surrounding olfactory sensory dendrites and are thought to aid in the capture and transport of hydrophobic odorants into and through this fluid. The chain is General odorant-binding protein 2 (GOBP2) from Manduca sexta (Tobacco hawkmoth).